A 103-amino-acid polypeptide reads, in one-letter code: Cystatin-A (103 aa).

Methionine 1 is subject to N-acetylmethionine. Residues 52–56 (QVVAG) carry the Secondary area of contact motif.

It belongs to the cystatin family.

The protein localises to the cytoplasm. This is an intracellular thiol proteinase inhibitor. The polypeptide is Cystatin-A (Csta) (Rattus norvegicus (Rat)).